The chain runs to 142 residues: Large ribosomal subunit protein uL13 (142 aa).

It belongs to the universal ribosomal protein uL13 family. As to quaternary structure, part of the 50S ribosomal subunit.

Its function is as follows. This protein is one of the early assembly proteins of the 50S ribosomal subunit, although it is not seen to bind rRNA by itself. It is important during the early stages of 50S assembly. The sequence is that of Large ribosomal subunit protein uL13 from Pseudomonas entomophila (strain L48).